The primary structure comprises 254 residues: Leucyl/phenylalanyl-tRNA--protein transferase (254 aa).

It belongs to the L/F-transferase family.

The protein resides in the cytoplasm. It catalyses the reaction N-terminal L-lysyl-[protein] + L-leucyl-tRNA(Leu) = N-terminal L-leucyl-L-lysyl-[protein] + tRNA(Leu) + H(+). The catalysed reaction is N-terminal L-arginyl-[protein] + L-leucyl-tRNA(Leu) = N-terminal L-leucyl-L-arginyl-[protein] + tRNA(Leu) + H(+). It carries out the reaction L-phenylalanyl-tRNA(Phe) + an N-terminal L-alpha-aminoacyl-[protein] = an N-terminal L-phenylalanyl-L-alpha-aminoacyl-[protein] + tRNA(Phe). Functionally, functions in the N-end rule pathway of protein degradation where it conjugates Leu, Phe and, less efficiently, Met from aminoacyl-tRNAs to the N-termini of proteins containing an N-terminal arginine or lysine. This chain is Leucyl/phenylalanyl-tRNA--protein transferase, found in Bordetella bronchiseptica (strain ATCC BAA-588 / NCTC 13252 / RB50) (Alcaligenes bronchisepticus).